Consider the following 153-residue polypeptide: MDLILDDRQDKLEVSEELIEKIKDIIIECLDYEGYDDNYEVSLSFVDNKEIHELNREYRGVDRVTDVLSFPLLSDDFEDVELEEESLGDIVVSLERALEQSIEYNHSFEREVCFLICHSMFHLLGYDHDTDENTKEMREKEEHILNKLNITRE.

Zn(2+)-binding residues include His-118, His-122, and His-128.

Belongs to the endoribonuclease YbeY family. Zn(2+) is required as a cofactor.

It localises to the cytoplasm. Single strand-specific metallo-endoribonuclease involved in late-stage 70S ribosome quality control and in maturation of the 3' terminus of the 16S rRNA. This is Endoribonuclease YbeY from Clostridioides difficile (strain 630) (Peptoclostridium difficile).